Reading from the N-terminus, the 314-residue chain is ATP synthase gamma chain (314 aa).

Belongs to the ATPase gamma chain family. As to quaternary structure, F-type ATPases have 2 components, CF(1) - the catalytic core - and CF(0) - the membrane proton channel. CF(1) has five subunits: alpha(3), beta(3), gamma(1), delta(1), epsilon(1). CF(0) has three main subunits: a, b and c.

The protein localises to the cellular thylakoid membrane. Produces ATP from ADP in the presence of a proton gradient across the membrane. The gamma chain is believed to be important in regulating ATPase activity and the flow of protons through the CF(0) complex. The chain is ATP synthase gamma chain from Synechococcus sp. (strain JA-2-3B'a(2-13)) (Cyanobacteria bacterium Yellowstone B-Prime).